The primary structure comprises 63 residues: MMATKKEKAENAFYIKDLREHSRELFGVKPEVFDGALFHVHKMSITKSEAKKLISQFLQKEVK.

This is an uncharacterized protein from Bacillus subtilis (strain 168).